The sequence spans 305 residues: Peroxisome biogenesis factor 2 (305 aa).

Residues 1–15 (MASRKENAKSANRVL) lie on the Peroxisomal matrix side of the membrane. Residues 16 to 42 (RISQLDALELNKALEQLVWSQFTQCFH) traverse the membrane as a helical segment. The Cytoplasmic portion of the chain corresponds to 43 to 48 (GFKPGL). A helical membrane pass occupies residues 49-74 (LARFEPEVKACLWVFLWRFTIYSKNA). Topologically, residues 75–98 (TVGQSVLNIKYKNDFSPNLRYQPP) are peroxisomal matrix. K84 is subject to N6-acetyllysine. The chain crosses the membrane as a helical span at residues 99 to 125 (SKNQKIWYAVCTIGGRWLEERCYDLFR). The Cytoplasmic segment spans residues 126 to 133 (NHHLASFG). The chain crosses the membrane as a helical span at residues 134–160 (KVKQCVNFVIGLLKLGGLINFLIFLQR). The Peroxisomal matrix segment spans residues 161–187 (GKFATLTERLLGIHSVFCKPQNICEVG). A helical transmembrane segment spans residues 188–211 (FEYMNRELLWHGFAEFLIFLLPLI). Residues 212–305 (NVQKLKAKLS…GIEMSEVNAL (94 aa)) lie on the Cytoplasmic side of the membrane. Zn(2+) contacts are provided by C244, C247, C259, H261, C264, C267, C280, and C283. The segment at 244 to 284 (CALCGEWPTMPHTIGCEHIFCYFCAKSSFLFDVYFTCPKCG) adopts an RING-type zinc-finger fold.

It belongs to the pex2/pex10/pex12 family. In terms of assembly, component of the PEX2-PEX10-PEX12 retrotranslocation channel, composed of PEX2, PEX10 and PEX12. Post-translationally, forms intramolecular and intermolecular disulfide bonds in response to reactive oxygen species (ROS), promoting higher stability.

Its subcellular location is the peroxisome membrane. It catalyses the reaction [E2 ubiquitin-conjugating enzyme]-S-ubiquitinyl-L-cysteine + [acceptor protein]-L-cysteine = [E2 ubiquitin-conjugating enzyme]-L-cysteine + [acceptor protein]-S-ubiquitinyl-L-cysteine.. The catalysed reaction is S-ubiquitinyl-[E2 ubiquitin-conjugating enzyme]-L-cysteine + [acceptor protein]-L-lysine = [E2 ubiquitin-conjugating enzyme]-L-cysteine + N(6)-ubiquitinyl-[acceptor protein]-L-lysine.. It participates in protein modification; protein ubiquitination. Its function is as follows. E3 ubiquitin-protein ligase component of a retrotranslocation channel required for peroxisome organization by mediating export of the PEX5 receptor from peroxisomes to the cytosol, thereby promoting PEX5 recycling. The retrotranslocation channel is composed of PEX2, PEX10 and PEX12; each subunit contributing transmembrane segments that coassemble into an open channel that specifically allows the passage of PEX5 through the peroxisomal membrane. PEX2 also regulates peroxisome organization by acting as a E3 ubiquitin-protein ligase. PEX2 ubiquitinates PEX5 during its passage through the retrotranslocation channel: catalyzes monoubiquitination of PEX5 at 'Cys-11', a modification that acts as a signal for PEX5 extraction into the cytosol. Required for pexophagy in response to starvation by mediating ubiquitination of peroxisomal proteins, such as PEX5 and ABCD3/PMP70. Also involved in the response to reactive oxygen species (ROS) by mediating 'Lys-48'-linked polyubiquitination and subsequent degradation of PNPLA2/ATGL, thereby regulating lipolysis. The protein is Peroxisome biogenesis factor 2 of Homo sapiens (Human).